The following is a 300-amino-acid chain: Bis(5'-nucleosyl)-tetraphosphatase, symmetrical (300 aa).

The protein belongs to the Ap4A hydrolase family.

It carries out the reaction P(1),P(4)-bis(5'-adenosyl) tetraphosphate + H2O = 2 ADP + 2 H(+). Its function is as follows. Hydrolyzes diadenosine 5',5'''-P1,P4-tetraphosphate to yield ADP. The polypeptide is Bis(5'-nucleosyl)-tetraphosphatase, symmetrical (Pseudomonas syringae pv. tomato (strain ATCC BAA-871 / DC3000)).